We begin with the raw amino-acid sequence, 239 residues long: Protein Thf1 (239 aa).

Residues 183 to 221 adopt a coiled-coil conformation; sequence ERVRKDLELYRSSLDRMKQARAVVEEMVKAARRQQERRQ. Positions 211–221 are enriched in basic and acidic residues; it reads KAARRQQERRQ. The interval 211-239 is disordered; that stretch reads KAARRQQERRQSAASLPETSLGDPSKPGS.

This sequence belongs to the THF1 family.

Functionally, may be involved in photosynthetic membrane biogenesis. This chain is Protein Thf1, found in Synechococcus sp. (strain JA-2-3B'a(2-13)) (Cyanobacteria bacterium Yellowstone B-Prime).